We begin with the raw amino-acid sequence, 346 residues long: N-acetyl-gamma-glutamyl-phosphate reductase (346 aa).

Cysteine 151 is an active-site residue.

The protein belongs to the NAGSA dehydrogenase family. Type 1 subfamily.

Its subcellular location is the cytoplasm. The enzyme catalyses N-acetyl-L-glutamate 5-semialdehyde + phosphate + NADP(+) = N-acetyl-L-glutamyl 5-phosphate + NADPH + H(+). The protein operates within amino-acid biosynthesis; L-arginine biosynthesis; N(2)-acetyl-L-ornithine from L-glutamate: step 3/4. Catalyzes the NADPH-dependent reduction of N-acetyl-5-glutamyl phosphate to yield N-acetyl-L-glutamate 5-semialdehyde. This Ehrlichia chaffeensis (strain ATCC CRL-10679 / Arkansas) protein is N-acetyl-gamma-glutamyl-phosphate reductase.